Consider the following 417-residue polypeptide: Paired box protein Pax-2 (417 aa).

Positions 16-142 (GHGGVNQLGG…SSINRIIRTK (127 aa)) form a DNA-binding region, paired. The PAI subdomain stretch occupies residues 19 to 75 (GVNQLGGVFVNGRPLPDVVRQRIVELAHQGVRPCDISRQLRVSHGCVSKILGRYYET). The tract at residues 94–142 (KVVDKIAEYKRQNPTMFAWEIRDRLLAEGICDNDTVPSVSSINRIIRTK) is RED subdomain. Residue Thr226 is modified to Phosphothreonine. Positions 304-325 (KSSLSASTNPELGSNVSGTQTY) are disordered. The span at 305–325 (SSLSASTNPELGSNVSGTQTY) shows a compositional bias: polar residues.

As to quaternary structure, interacts with ELGN3; the interaction targets PAX2 for destruction. Interacts with TLE4. In terms of tissue distribution, expressed in primitive cells of the kidney, ureter, eye, ear and central nervous system.

The protein resides in the nucleus. Its function is as follows. Transcription factor that may have a role in kidney cell differentiation. Has a critical role in the development of the urogenital tract, the eyes, and the CNS. This chain is Paired box protein Pax-2 (PAX2), found in Homo sapiens (Human).